A 408-amino-acid polypeptide reads, in one-letter code: Large ribosomal subunit protein uL4 (408 aa).

Residues 58–98 (PYAVSKKAGHQTSAESWGTGRAVSRIPRVPGGGTHRAGQGA) are disordered.

It belongs to the universal ribosomal protein uL4 family.

In Prunus armeniaca (Apricot), this protein is Large ribosomal subunit protein uL4 (RPL4).